The chain runs to 268 residues: Tryptophan synthase alpha chain (268 aa).

Residues Glu-49 and Asp-60 each act as proton acceptor in the active site.

The protein belongs to the TrpA family. Tetramer of two alpha and two beta chains.

The catalysed reaction is (1S,2R)-1-C-(indol-3-yl)glycerol 3-phosphate + L-serine = D-glyceraldehyde 3-phosphate + L-tryptophan + H2O. The protein operates within amino-acid biosynthesis; L-tryptophan biosynthesis; L-tryptophan from chorismate: step 5/5. The alpha subunit is responsible for the aldol cleavage of indoleglycerol phosphate to indole and glyceraldehyde 3-phosphate. This Shigella boydii serotype 18 (strain CDC 3083-94 / BS512) protein is Tryptophan synthase alpha chain.